The primary structure comprises 284 residues: MEMO1 family protein Mevan_0697 (284 aa).

The protein belongs to the MEMO1 family.

In Methanococcus vannielii (strain ATCC 35089 / DSM 1224 / JCM 13029 / OCM 148 / SB), this protein is MEMO1 family protein Mevan_0697.